The following is a 148-amino-acid chain: Ubiquitin-conjugating enzyme E2-16 kDa (148 aa).

One can recognise a UBC core domain in the interval 2-148 (SSSKRIAKEL…AKEWTKKYAV (147 aa)). The residue at position 12 (S12) is a Phosphoserine. C86 acts as the Glycyl thioester intermediate in catalysis. A Glycyl lysine isopeptide (Lys-Gly) (interchain with G-Cter in ubiquitin) cross-link involves residue K91.

It belongs to the ubiquitin-conjugating enzyme family. Component of the RSP5-UBA1-UBC5 ubiquitin ligase complex composed of E3 RSP5, E1 UBA1 and E2 UBC5. Post-translationally, the N-terminus is blocked.

The enzyme catalyses S-ubiquitinyl-[E1 ubiquitin-activating enzyme]-L-cysteine + [E2 ubiquitin-conjugating enzyme]-L-cysteine = [E1 ubiquitin-activating enzyme]-L-cysteine + S-ubiquitinyl-[E2 ubiquitin-conjugating enzyme]-L-cysteine.. Its pathway is protein modification; protein ubiquitination. Functionally, catalyzes the covalent attachment of ubiquitin to other proteins. Mediates the selective degradation of short-lived and abnormal proteins. The RSP5-UBA1-UBC5 ubiquitin ligase complex ubiquitinates RPO21 forming 'Lys-63'-linked polyubiquitin chains. This Saccharomyces cerevisiae (strain ATCC 204508 / S288c) (Baker's yeast) protein is Ubiquitin-conjugating enzyme E2-16 kDa (UBC5).